Here is a 405-residue protein sequence, read N- to C-terminus: uncharacterized protein (405 aa).

Residues 1 to 20 (MKAKLALSIIGLVLASLVAG) form the signal peptide. N-acetylcysteine is present on C21. C21 is lipidated: S-archaeol cysteine.

Belongs to the BMP lipoprotein family.

Its subcellular location is the cell membrane. This is an uncharacterized protein from Pyrococcus horikoshii (strain ATCC 700860 / DSM 12428 / JCM 9974 / NBRC 100139 / OT-3).